Reading from the N-terminus, the 340-residue chain is PI-PLC X domain-containing protein 2 (340 aa).

One can recognise a PI-PLC X-box domain in the interval 42 to 215; it reads HLHNVPLSNL…KYQVLIFYHC (174 aa). Active-site residues include H57 and H132.

As to expression, expressed at highest levels in brain, followed by stomach and small intestine. Detected at low levels in kidney, ey, thymus and slkeletal muscle.

It is found in the nucleus. The catalysed reaction is a 1,2-diacyl-sn-glycero-3-phospho-(1D-myo-inositol) + H2O = 1D-myo-inositol 1-phosphate + a 1,2-diacyl-sn-glycerol + H(+). In terms of biological role, catalyzes the hydrolysis of inositol from phosphatidylinositol (1,2-diacyl-sn-glycero-3-phospho-(1D-myo-inositol), PI). Could also hydrolyze various multi-phosphorylated derivatives of PI, such as phosphatidylinositol-4,5 bisphosphate (PIP2), releasing inositol-1,4,5-trisphosphate (IP3) and the protein kinase C activator diacylglycerol (DAG), therefore mediating cell signaling. This chain is PI-PLC X domain-containing protein 2 (Plcxd2), found in Mus musculus (Mouse).